The primary structure comprises 87 residues: Large ribosomal subunit protein bL27 (87 aa).

The interval 1–22 (MAHKKGQGSVKNGRDSRSKRLG) is disordered.

This sequence belongs to the bacterial ribosomal protein bL27 family.

The sequence is that of Large ribosomal subunit protein bL27 from Akkermansia muciniphila (strain ATCC BAA-835 / DSM 22959 / JCM 33894 / BCRC 81048 / CCUG 64013 / CIP 107961 / Muc).